Reading from the N-terminus, the 455-residue chain is Beta-glucosidase A (455 aa).

Catalysis depends on Glu165, which acts as the Proton donor. Residue Glu363 is the Nucleophile of the active site.

Belongs to the glycosyl hydrolase 1 family.

The enzyme catalyses Hydrolysis of terminal, non-reducing beta-D-glucosyl residues with release of beta-D-glucose.. In Caldicellulosiruptor saccharolyticus (Caldocellum saccharolyticum), this protein is Beta-glucosidase A (bglA).